Here is a 294-residue protein sequence, read N- to C-terminus: 1D-myo-inositol 2-acetamido-2-deoxy-alpha-D-glucopyranoside deacetylase (294 aa).

Zn(2+) contacts are provided by His13, Asp16, and His148.

The protein belongs to the MshB deacetylase family. The cofactor is Zn(2+).

The enzyme catalyses 1D-myo-inositol 2-acetamido-2-deoxy-alpha-D-glucopyranoside + H2O = 1D-myo-inositol 2-amino-2-deoxy-alpha-D-glucopyranoside + acetate. Functionally, catalyzes the deacetylation of 1D-myo-inositol 2-acetamido-2-deoxy-alpha-D-glucopyranoside (GlcNAc-Ins) in the mycothiol biosynthesis pathway. In Geodermatophilus obscurus (strain ATCC 25078 / DSM 43160 / JCM 3152 / CCUG 61914 / KCC A-0152 / KCTC 9177 / NBRC 13315 / NRRL B-3577 / G-20), this protein is 1D-myo-inositol 2-acetamido-2-deoxy-alpha-D-glucopyranoside deacetylase.